Reading from the N-terminus, the 284-residue chain is Phosphonates import ATP-binding protein PhnC 2 (284 aa).

The ABC transporter domain occupies 24–264 (IRIDGISVRR…LEARIFPSLA (241 aa)). 56–63 (GPSGVGKT) is a binding site for ATP.

Belongs to the ABC transporter superfamily. Phosphonates importer (TC 3.A.1.9.1) family. In terms of assembly, the complex is composed of two ATP-binding proteins (PhnC), two transmembrane proteins (PhnE) and a solute-binding protein (PhnD).

Its subcellular location is the cell inner membrane. The catalysed reaction is phosphonate(out) + ATP + H2O = phosphonate(in) + ADP + phosphate + H(+). In terms of biological role, part of the ABC transporter complex PhnCDE involved in phosphonates import. Responsible for energy coupling to the transport system. This Rhodopseudomonas palustris (strain ATCC BAA-98 / CGA009) protein is Phosphonates import ATP-binding protein PhnC 2.